The primary structure comprises 433 residues: 3-phosphoshikimate 1-carboxyvinyltransferase (433 aa).

3-phosphoshikimate contacts are provided by K22, S23, and R27. Residue K22 coordinates phosphoenolpyruvate. G95 and R123 together coordinate phosphoenolpyruvate. Positions 167, 169, 315, and 342 each coordinate 3-phosphoshikimate. Q169 is a binding site for phosphoenolpyruvate. D315 acts as the Proton acceptor in catalysis. Phosphoenolpyruvate contacts are provided by R346 and R387.

This sequence belongs to the EPSP synthase family. Monomer.

The protein localises to the cytoplasm. The catalysed reaction is 3-phosphoshikimate + phosphoenolpyruvate = 5-O-(1-carboxyvinyl)-3-phosphoshikimate + phosphate. It functions in the pathway metabolic intermediate biosynthesis; chorismate biosynthesis; chorismate from D-erythrose 4-phosphate and phosphoenolpyruvate: step 6/7. Functionally, catalyzes the transfer of the enolpyruvyl moiety of phosphoenolpyruvate (PEP) to the 5-hydroxyl of shikimate-3-phosphate (S3P) to produce enolpyruvyl shikimate-3-phosphate and inorganic phosphate. In Legionella pneumophila (strain Paris), this protein is 3-phosphoshikimate 1-carboxyvinyltransferase.